Here is a 113-residue protein sequence, read N- to C-terminus: Phosphoribosyl-ATP pyrophosphatase (113 aa).

It belongs to the PRA-PH family.

The protein localises to the cytoplasm. The catalysed reaction is 1-(5-phospho-beta-D-ribosyl)-ATP + H2O = 1-(5-phospho-beta-D-ribosyl)-5'-AMP + diphosphate + H(+). The protein operates within amino-acid biosynthesis; L-histidine biosynthesis; L-histidine from 5-phospho-alpha-D-ribose 1-diphosphate: step 2/9. The protein is Phosphoribosyl-ATP pyrophosphatase of Hydrogenovibrio crunogenus (strain DSM 25203 / XCL-2) (Thiomicrospira crunogena).